The following is a 512-amino-acid chain: Probable multidrug resistance protein EmrY (512 aa).

Residues 1-8 lie on the Cytoplasmic side of the membrane; it reads MAITKSTP. The chain crosses the membrane as a helical span at residues 9–29; that stretch reads APLTGGTLWCVTIALSLATFM. Position 30 (Q30) is a topological domain, periplasmic. The chain crosses the membrane as a helical span at residues 31 to 51; the sequence is MLDSTISNVAIPTISGFLGAS. Topologically, residues 52-53 are cytoplasmic; sequence TD. A helical transmembrane segment spans residues 54–74; the sequence is EGTWVITSFGVANAIAIPVTG. At 75–84 the chain is on the periplasmic side; it reads RLAQRIGELR. Transmembrane regions (helical) follow at residues 85 to 105 and 106 to 126; these read LFLL…LSTN and LDVL…LIPL. Over 127 to 141 the chain is Periplasmic; sequence SQSLLLRNYPPEKRT. Residues 142 to 162 traverse the membrane as a helical segment; that stretch reads FALALWSMTVIIAPICGPILG. The Cytoplasmic portion of the chain corresponds to 163-172; it reads GYICDNFSWG. Residues 173–193 traverse the membrane as a helical segment; the sequence is WIFLINVPMGIIVLTLCLTLL. Residues 194-204 lie on the Periplasmic side of the membrane; the sequence is KGRETETSPVK. Residues 205-225 traverse the membrane as a helical segment; sequence MNLPGLTLLVLGVGGLQIMLD. The Cytoplasmic portion of the chain corresponds to 226–234; that stretch reads KGRDLDWFN. Residues 235-255 form a helical membrane-spanning segment; it reads SSTIIILTVVSVISLISLVIW. At 256–273 the chain is on the periplasmic side; sequence ESTSENPILDLSLFKSRN. Residues 274–294 traverse the membrane as a helical segment; sequence FTIGIVSITCAYLFYSGAIVL. The Cytoplasmic segment spans residues 295-307; sequence MPQLLQETMGYNA. A helical transmembrane segment spans residues 308–328; that stretch reads IWAGLAYAPIGIMPLLISPLI. The Periplasmic segment spans residues 329 to 338; it reads GRYGNKIDMR. The helical transmembrane segment at 339 to 359 threads the bilayer; sequence LLVTFSFLMYAVCYYWRSVTF. Over 360–364 the chain is Cytoplasmic; the sequence is MPTID. A helical membrane pass occupies residues 365-385; sequence FTGIILPQFFQGFAVACFFLP. The Periplasmic portion of the chain corresponds to 386 to 486; the sequence is LTTISFSGLP…LSISANEIFR (101 aa). A helical membrane pass occupies residues 487-507; that stretch reads MAAIAFILLTVLVWFAKPPFT. Over 508 to 512 the chain is Cytoplasmic; the sequence is AKGVG.

Belongs to the major facilitator superfamily. EmrB family. Part of the tripartite efflux system EmrYK-TolC, which is composed of an inner membrane transporter, EmrY, a membrane fusion protein, EmrK, and an outer membrane component, TolC. The complex forms a large protein conduit and can translocate molecules across both the inner and outer membranes.

It is found in the cell inner membrane. Functionally, part of the tripartite efflux system EmrYK-TolC, which confers resistance to various drugs. The chain is Probable multidrug resistance protein EmrY (emrY) from Escherichia coli (strain K12).